A 206-amino-acid polypeptide reads, in one-letter code: Large ribosomal subunit protein uL4 (206 aa).

Residues 47 to 75 are disordered; sequence GTQSAKTRAEVSGGGIKPWRQKGTGRARQ.

Belongs to the universal ribosomal protein uL4 family. In terms of assembly, part of the 50S ribosomal subunit.

In terms of biological role, one of the primary rRNA binding proteins, this protein initially binds near the 5'-end of the 23S rRNA. It is important during the early stages of 50S assembly. It makes multiple contacts with different domains of the 23S rRNA in the assembled 50S subunit and ribosome. Forms part of the polypeptide exit tunnel. The polypeptide is Large ribosomal subunit protein uL4 (Clostridium botulinum (strain 657 / Type Ba4)).